The following is a 265-amino-acid chain: Indole-3-glycerol phosphate synthase (265 aa).

Belongs to the TrpC family.

It catalyses the reaction 1-(2-carboxyphenylamino)-1-deoxy-D-ribulose 5-phosphate + H(+) = (1S,2R)-1-C-(indol-3-yl)glycerol 3-phosphate + CO2 + H2O. It functions in the pathway amino-acid biosynthesis; L-tryptophan biosynthesis; L-tryptophan from chorismate: step 4/5. This Chromobacterium violaceum (strain ATCC 12472 / DSM 30191 / JCM 1249 / CCUG 213 / NBRC 12614 / NCIMB 9131 / NCTC 9757 / MK) protein is Indole-3-glycerol phosphate synthase.